A 227-amino-acid chain; its full sequence is Cytidylate kinase (227 aa).

12-20 (GPSGAGKGT) lines the ATP pocket.

Belongs to the cytidylate kinase family. Type 1 subfamily.

It is found in the cytoplasm. It catalyses the reaction CMP + ATP = CDP + ADP. The enzyme catalyses dCMP + ATP = dCDP + ADP. The protein is Cytidylate kinase of Marinomonas sp. (strain MWYL1).